Here is a 348-residue protein sequence, read N- to C-terminus: Erlin-1 (348 aa).

Topologically, residues 1–7 are cytoplasmic; sequence MNMTQAR. A helical membrane pass occupies residues 8 to 28; that stretch reads VLVAAVVGLVAVLLYASIHKI. At 29-348 the chain is on the lumenal side; that stretch reads EEGHLAVYYR…NVIQNKESTG (320 aa). Asn108 is a glycosylation site (N-linked (GlcNAc...) asparagine). An N6-acetyllysine modification is found at Lys269. The disordered stretch occupies residues 325-348; sequence SSLPSKEALEPSGENVIQNKESTG. A compositionally biased stretch (polar residues) spans 339–348; the sequence is NVIQNKESTG.

It belongs to the band 7/mec-2 family. As to quaternary structure, forms a heteromeric complex with ERLIN2. In complex with ERLIN2, interacts with RNF170. Interacts with AMFR and SYVN1. In terms of processing, deubiquitinated by USP25; leading to stabilization. As to expression, expressed in heart, placenta, liver, kidney, pancreas, prostate, testis, ovary and small intestine.

It localises to the endoplasmic reticulum membrane. Its function is as follows. Component of the ERLIN1/ERLIN2 complex which mediates the endoplasmic reticulum-associated degradation (ERAD) of inositol 1,4,5-trisphosphate receptors (IP3Rs). Involved in regulation of cellular cholesterol homeostasis by regulation the SREBP signaling pathway. Binds cholesterol and may promote ER retention of the SCAP-SREBF complex. Functionally, (Microbial infection) Required early in hepatitis C virus (HCV) infection to initiate RNA replication, and later in the infection to support infectious virus production. The polypeptide is Erlin-1 (Homo sapiens (Human)).